A 1011-amino-acid polypeptide reads, in one-letter code: Ankyrin repeat domain-containing protein 18B (1011 aa).

ANK repeat units lie at residues 67-96 (KDRT…QINI), 100-129 (LNRT…NPNI), 133-162 (YGNT…NIEA), 166-195 (EGNT…NIHA), and 199-228 (FKRT…HISS). 2 disordered regions span residues 264-330 (LRND…GKKK) and 533-554 (MHPN…SEER). 4 coiled-coil regions span residues 277–319 (ENLK…ENKQ), 385–639 (NEEM…ELVD), 692–722 (ISLL…CLEM), and 752–908 (FKKL…EAFA). Positions 280–293 (KKRKKRKKLKKRKE) are enriched in basic residues. Residues 294–319 (GAKAEHNLKVASEEKQERLERSENKQ) show a composition bias toward basic and acidic residues.

This Homo sapiens (Human) protein is Ankyrin repeat domain-containing protein 18B (ANKRD18B).